The sequence spans 390 residues: Leu/Ile/Val-binding protein homolog 6 (390 aa).

An N-terminal signal peptide occupies residues 1–21; it reads MKKIALTALAVFSLAASAAYA.

This sequence belongs to the leucine-binding protein family.

Component of an amino-acid transport system. The chain is Leu/Ile/Val-binding protein homolog 6 from Brucella melitensis biotype 1 (strain ATCC 23456 / CCUG 17765 / NCTC 10094 / 16M).